Here is a 349-residue protein sequence, read N- to C-terminus: Glycerol-3-phosphate dehydrogenase [NAD(+)], cytoplasmic (349 aa).

Residue 10-15 coordinates NAD(+); the sequence is GSGNWG. Substrate is bound at residue Lys-120. Ala-153 provides a ligand contact to NAD(+). Phosphoserine is present on Ser-154. Residue Lys-204 is the Proton acceptor of the active site. Residue Arg-269 coordinates NAD(+). 269–270 is a substrate binding site; it reads RN. Lys-289 carries the N6-succinyllysine modification. 2 residues coordinate NAD(+): Lys-296 and Gln-298. Position 326 is a phosphotyrosine (Tyr-326).

Belongs to the NAD-dependent glycerol-3-phosphate dehydrogenase family. As to quaternary structure, homodimer.

The protein localises to the cytoplasm. The catalysed reaction is sn-glycerol 3-phosphate + NAD(+) = dihydroxyacetone phosphate + NADH + H(+). Its function is as follows. Has glycerol-3-phosphate dehydrogenase activity. The polypeptide is Glycerol-3-phosphate dehydrogenase [NAD(+)], cytoplasmic (Rattus norvegicus (Rat)).